The primary structure comprises 2138 residues: Non-reducing polyketide synthase rads2 (2138 aa).

Residues 11–249 are N-terminal acylcarrier protein transacylase (SAT) domain; sequence LIFGDQTDSW…NPLNIHALQH (239 aa). Residues 373-804 enclose the Ketosynthase family 3 (KS3) domain; the sequence is SGRIAIVGMA…GGNACMLLED (432 aa). Catalysis depends on for beta-ketoacyl synthase activity residues cysteine 549, histidine 684, and histidine 724. Residues 901–1184 form a malonyl-CoA:ACP transacylase (MAT) domain region; sequence VFVFGGQGSH…KGVCTSFVRA (284 aa). Serine 992 (for acyl/malonyl transferase activity) is an active-site residue. The segment at 1291–1437 is N-terminal hotdog fold; sequence AQYVVQESPS…KDVQRLQADW (147 aa). Residues 1291–1610 form the PKS/mFAS DH domain; sequence AQYVVQESPS…FHEISNATLK (320 aa). Residues 1303 to 1607 form a product template (PT) domain region; sequence KKIQVTFRAS…GLEFHEISNA (305 aa). A C-terminal hotdog fold region spans residues 1459–1610; that stretch reads HGHRFQPDIF…FHEISNATLK (152 aa). The interval 1618–1666 is disordered; the sequence is SKSVLKPDNAAPLKAPEKKEDATPTAPKKSADPGKEEEEEGDTATPAAV. The region spanning 1666 to 1740 is the Carrier domain; sequence VGEFEVIIQT…DLRRAFAMAP (75 aa). Residue serine 1700 is modified to O-(pantetheine 4'-phosphoryl)serine. Residues 1740-1771 show a composition bias toward low complexity; the sequence is PSSSSSTSASESVSESLDDSSSTSRSATPSSS. Disordered regions lie at residues 1740 to 1781 and 1807 to 1828; these read PSSS…GFVE and QATK…SSPA. The segment at 1860 to 2006 is thioesterase (TE) domain; sequence ADGTGSIATY…TRRHLGAMFS (147 aa).

Its pathway is secondary metabolite biosynthesis. Non-reducing polyketide synthase; part of the gene cluster that mediates the biosynthesis of radicicol, a resorcylic acid lactone (RAL) that irreversibly inhibits the HSP90 molecular chaperone, an important target for cancer chemotherapy. The cluster encodes only two apparent post-PKS enzymes, a cytochrome P450 monooxygenase (radP) and a non-heme halogenase (radH) that introduce the epoxide and the chlorine, respectively. If this cluster includes all the genes required for radicicol biosynthesis, the remaining structural features of radicicol are presumably generated by the PKSs rads1 and rads2. The C-2' ketone could arise if the R-PKS rads1 and NR-PKS rads2 each carry out four iterations, in contrast to the five iteration-three iteration split for the hypothemycin PKSs. The origin of the cis 5',6' double bond is not known. The radicicol R-PKS rads1 ER domain may catalyze either double bond isomerization or reduction in the third iteration. The sequence is that of Non-reducing polyketide synthase rads2 from Floropilus chiversii (Chaetomium chiversii).